Here is a 91-residue protein sequence, read N- to C-terminus: MRRRCCISYLINSRPNHAKQIVTASHFITSSFQPLTTMTCFIKPLTLNVFNLYSLVANSKYYKIDAVPCKHEANNKPRRILPVDDQPKHQP.

This is an uncharacterized protein from Archaeoglobus fulgidus (strain ATCC 49558 / DSM 4304 / JCM 9628 / NBRC 100126 / VC-16).